The sequence spans 246 residues: Ribonuclease PH (246 aa).

Residues R91 and 129–131 contribute to the phosphate site; that span reads GTR.

It belongs to the RNase PH family. In terms of assembly, homohexameric ring arranged as a trimer of dimers.

The enzyme catalyses tRNA(n+1) + phosphate = tRNA(n) + a ribonucleoside 5'-diphosphate. Its function is as follows. Phosphorolytic 3'-5' exoribonuclease that plays an important role in tRNA 3'-end maturation. Removes nucleotide residues following the 3'-CCA terminus of tRNAs; can also add nucleotides to the ends of RNA molecules by using nucleoside diphosphates as substrates, but this may not be physiologically important. Probably plays a role in initiation of 16S rRNA degradation (leading to ribosome degradation) during starvation. The protein is Ribonuclease PH of Burkholderia orbicola (strain MC0-3).